We begin with the raw amino-acid sequence, 414 residues long: Putative polyketide beta-ketoacyl synthase 2 (414 aa).

In terms of domain architecture, Ketosynthase family 3 (KS3) spans 4-407 (PRRAVVTGLG…GNNSALVLRR (404 aa)).

The protein belongs to the thiolase-like superfamily. Beta-ketoacyl-ACP synthases family.

Involved in developmentally regulated synthesis of a compound biosynthetically related to polyketide antibiotics which is essential for spore color in Streptomyces halstedii. This Streptomyces halstedii protein is Putative polyketide beta-ketoacyl synthase 2 (sch2).